The primary structure comprises 246 residues: Ubiquinone biosynthesis O-methyltransferase (246 aa).

The S-adenosyl-L-methionine site is built by R44, G63, D84, and M128.

This sequence belongs to the methyltransferase superfamily. UbiG/COQ3 family.

It catalyses the reaction a 3-demethylubiquinol + S-adenosyl-L-methionine = a ubiquinol + S-adenosyl-L-homocysteine + H(+). The catalysed reaction is a 3-(all-trans-polyprenyl)benzene-1,2-diol + S-adenosyl-L-methionine = a 2-methoxy-6-(all-trans-polyprenyl)phenol + S-adenosyl-L-homocysteine + H(+). Its pathway is cofactor biosynthesis; ubiquinone biosynthesis. In terms of biological role, O-methyltransferase that catalyzes the 2 O-methylation steps in the ubiquinone biosynthetic pathway. This is Ubiquinone biosynthesis O-methyltransferase from Xylella fastidiosa (strain 9a5c).